The primary structure comprises 41 residues: Photosystem I reaction center subunit IX (41 aa).

A helical transmembrane segment spans residues 7 to 27 (YLSTAPVVAAAWFTFTAGLLI).

It belongs to the PsaJ family.

It is found in the plastid. The protein localises to the chloroplast thylakoid membrane. May help in the organization of the PsaE and PsaF subunits. This Oltmannsiellopsis viridis (Marine flagellate) protein is Photosystem I reaction center subunit IX.